The sequence spans 224 residues: Probable C-&gt;U-editing enzyme APOBEC-2 (224 aa).

A disordered region spans residues 1-25; the sequence is MAQKEEAAAATEAASQNGEDLENLD. E60 and H98 together coordinate Zn(2+). Residues 64 to 169 enclose the CMP/dCMP-type deaminase domain; the sequence is GRNKTFLCYV…LEIQDALKKL (106 aa). The active-site Proton donor is the E100. Residues C128 and C131 each contribute to the Zn(2+) site.

The protein belongs to the cytidine and deoxycytidylate deaminase family. In terms of assembly, homotetramer. The cofactor is Zn(2+).

The catalysed reaction is cytidine(6666) in apoB mRNA + H2O + H(+) = uridine(6666) in apoB mRNA + NH4(+). Probable C to U editing enzyme whose physiological substrate is not yet known. Does not display detectable apoB mRNA editing. Has a low intrinsic cytidine deaminase activity. May play a role in the epigenetic regulation of gene expression through the process of active DNA demethylation. The chain is Probable C-&gt;U-editing enzyme APOBEC-2 (APOBEC2) from Pongo pygmaeus (Bornean orangutan).